The primary structure comprises 31 residues: Cytochrome b6-f complex subunit 6 (31 aa).

Residues 4 to 26 traverse the membrane as a helical segment; that stretch reads ITSYFGFLLTALTITSALFIGLS.

The protein belongs to the PetL family. As to quaternary structure, the 4 large subunits of the cytochrome b6-f complex are cytochrome b6, subunit IV (17 kDa polypeptide, PetD), cytochrome f and the Rieske protein, while the 4 small subunits are PetG, PetL, PetM and PetN. The complex functions as a dimer.

The protein resides in the plastid. The protein localises to the chloroplast thylakoid membrane. Component of the cytochrome b6-f complex, which mediates electron transfer between photosystem II (PSII) and photosystem I (PSI), cyclic electron flow around PSI, and state transitions. PetL is important for photoautotrophic growth as well as for electron transfer efficiency and stability of the cytochrome b6-f complex. The sequence is that of Cytochrome b6-f complex subunit 6 from Lactuca sativa (Garden lettuce).